The chain runs to 77 residues: Teretoxin Tsu15.4 (77 aa).

The first 21 residues, 1-21, serve as a signal peptide directing secretion; sequence MTKLTVLLLAILVLLPLATSN. Residues 22–40 constitute a propeptide that is removed on maturation; the sequence is SAADEALASLSGLLRRAKR.

In terms of processing, contains 4 disulfide bonds. In terms of tissue distribution, expressed by the venom duct.

Its subcellular location is the secreted. The protein is Teretoxin Tsu15.4 of Terebra subulata (Chocolate spotted auger).